We begin with the raw amino-acid sequence, 177 residues long: ATP synthase subunit delta (177 aa).

It belongs to the ATPase delta chain family. In terms of assembly, F-type ATPases have 2 components, F(1) - the catalytic core - and F(0) - the membrane proton channel. F(1) has five subunits: alpha(3), beta(3), gamma(1), delta(1), epsilon(1). F(0) has three main subunits: a(1), b(2) and c(10-14). The alpha and beta chains form an alternating ring which encloses part of the gamma chain. F(1) is attached to F(0) by a central stalk formed by the gamma and epsilon chains, while a peripheral stalk is formed by the delta and b chains.

The protein localises to the cell membrane. Its function is as follows. F(1)F(0) ATP synthase produces ATP from ADP in the presence of a proton or sodium gradient. F-type ATPases consist of two structural domains, F(1) containing the extramembraneous catalytic core and F(0) containing the membrane proton channel, linked together by a central stalk and a peripheral stalk. During catalysis, ATP synthesis in the catalytic domain of F(1) is coupled via a rotary mechanism of the central stalk subunits to proton translocation. This protein is part of the stalk that links CF(0) to CF(1). It either transmits conformational changes from CF(0) to CF(1) or is implicated in proton conduction. The protein is ATP synthase subunit delta of Buchnera aphidicola subsp. Acyrthosiphon pisum (strain 5A).